A 217-amino-acid polypeptide reads, in one-letter code: Octanoyltransferase (217 aa).

Positions 32–207 (SESHDELWIV…TFSQLLGYQH (176 aa)) constitute a BPL/LPL catalytic domain. Residues 71 to 78 (RGGQVTYH), 138 to 140 (SLG), and 151 to 153 (GLA) contribute to the substrate site. Cys169 functions as the Acyl-thioester intermediate in the catalytic mechanism.

Belongs to the LipB family.

The protein localises to the cytoplasm. It catalyses the reaction octanoyl-[ACP] + L-lysyl-[protein] = N(6)-octanoyl-L-lysyl-[protein] + holo-[ACP] + H(+). It participates in protein modification; protein lipoylation via endogenous pathway; protein N(6)-(lipoyl)lysine from octanoyl-[acyl-carrier-protein]: step 1/2. Functionally, catalyzes the transfer of endogenously produced octanoic acid from octanoyl-acyl-carrier-protein onto the lipoyl domains of lipoate-dependent enzymes. Lipoyl-ACP can also act as a substrate although octanoyl-ACP is likely to be the physiological substrate. The protein is Octanoyltransferase of Shewanella baltica (strain OS155 / ATCC BAA-1091).